The primary structure comprises 367 residues: Inositol-3-phosphate synthase (367 aa).

NAD(+)-binding residues include aspartate 78, alanine 137, tyrosine 157, serine 200, aspartate 235, and lysine 248.

It belongs to the myo-inositol 1-phosphate synthase family. NAD(+) serves as cofactor.

It carries out the reaction D-glucose 6-phosphate = 1D-myo-inositol 3-phosphate. Key enzyme in myo-inositol biosynthesis pathway that catalyzes the conversion of glucose 6-phosphate to 1D-myo-inositol 3-phosphate in a NAD-dependent manner. This Mycobacterium tuberculosis (strain CDC 1551 / Oshkosh) protein is Inositol-3-phosphate synthase (ino1).